The sequence spans 337 residues: Fructose-1,6-bisphosphatase class 1 (337 aa).

Mg(2+)-binding residues include glutamate 89, aspartate 112, leucine 114, and aspartate 115. Residues 115–118 (DGSS), asparagine 208, tyrosine 241, and lysine 271 each bind substrate. Glutamate 277 provides a ligand contact to Mg(2+).

The protein belongs to the FBPase class 1 family. Homotetramer. Mg(2+) serves as cofactor.

Its subcellular location is the cytoplasm. The catalysed reaction is beta-D-fructose 1,6-bisphosphate + H2O = beta-D-fructose 6-phosphate + phosphate. It functions in the pathway carbohydrate biosynthesis; gluconeogenesis. The polypeptide is Fructose-1,6-bisphosphatase class 1 (Yersinia pestis bv. Antiqua (strain Antiqua)).